Reading from the N-terminus, the 444-residue chain is Cortexillin-1 (444 aa).

The segment at 1–227 (MAGKDWEIVQ…VLYTSLFFHA (227 aa)) is actin-binding. Calponin-homology (CH) domains follow at residues 8–115 (IVQE…RKYR) and 124–229 (KSSE…HAYR). Coiled coils occupy residues 227-352 (AYRA…TRIR) and 410-434 (LATK…DLKA).

Belongs to the cortexillin family. In terms of assembly, homodimer; parallel.

The protein resides in the cytoplasm. The protein localises to the cytoskeleton. Its function is as follows. Actin-bundling protein. When linked to F-actin the actin filaments form preferentially anti-parallel bundles that associate into meshworks. Plays a major role in cytokinesis. Negatively regulates cortical localization of rapgap1. The protein is Cortexillin-1 (ctxA) of Dictyostelium discoideum (Social amoeba).